The primary structure comprises 193 residues: Ribonuclease HII (193 aa).

Residues 15–193 form the RNase H type-2 domain; sequence CIVAGIDEAG…PYHRRSFRCC (179 aa). A divalent metal cation is bound by residues aspartate 21, glutamate 22, and aspartate 112.

Belongs to the RNase HII family. Mn(2+) is required as a cofactor. It depends on Mg(2+) as a cofactor.

It localises to the cytoplasm. The enzyme catalyses Endonucleolytic cleavage to 5'-phosphomonoester.. In terms of biological role, endonuclease that specifically degrades the RNA of RNA-DNA hybrids. The polypeptide is Ribonuclease HII (Rickettsia conorii (strain ATCC VR-613 / Malish 7)).